Here is a 288-residue protein sequence, read N- to C-terminus: Cell division protein ZipA (288 aa).

Met1 is a topological domain (periplasmic). A helical membrane pass occupies residues 2–22; it reads EIGLREWLIVIGIIVIAGILF. Topologically, residues 23-288 are cytoplasmic; that stretch reads DGWRRMRGGK…ERRALTQRRG (266 aa). The interval 48-138 is disordered; sequence DEEETTSAEV…DDKPAQRITE (91 aa). 3 stretches are compositionally biased toward basic and acidic residues: residues 64 to 77, 85 to 105, and 122 to 138; these read LDTH…EHDL, RDNK…KDEP, and ARDD…RITE.

The protein belongs to the ZipA family. Interacts with FtsZ via their C-terminal domains.

The protein localises to the cell inner membrane. Its function is as follows. Essential cell division protein that stabilizes the FtsZ protofilaments by cross-linking them and that serves as a cytoplasmic membrane anchor for the Z ring. Also required for the recruitment to the septal ring of downstream cell division proteins. The polypeptide is Cell division protein ZipA (Pseudomonas syringae pv. tomato (strain ATCC BAA-871 / DC3000)).